Reading from the N-terminus, the 409-residue chain is Serine hydroxymethyltransferase (409 aa).

(6S)-5,6,7,8-tetrahydrofolate-binding positions include Leu-116 and 120-122; that span reads GHL. Lys-225 is subject to N6-(pyridoxal phosphate)lysine.

The protein belongs to the SHMT family. Homodimer. Requires pyridoxal 5'-phosphate as cofactor.

The protein resides in the cytoplasm. It catalyses the reaction (6R)-5,10-methylene-5,6,7,8-tetrahydrofolate + glycine + H2O = (6S)-5,6,7,8-tetrahydrofolate + L-serine. The protein operates within one-carbon metabolism; tetrahydrofolate interconversion. It participates in amino-acid biosynthesis; glycine biosynthesis; glycine from L-serine: step 1/1. Catalyzes the reversible interconversion of serine and glycine with tetrahydrofolate (THF) serving as the one-carbon carrier. This reaction serves as the major source of one-carbon groups required for the biosynthesis of purines, thymidylate, methionine, and other important biomolecules. Also exhibits THF-independent aldolase activity toward beta-hydroxyamino acids, producing glycine and aldehydes, via a retro-aldol mechanism. This is Serine hydroxymethyltransferase from Acholeplasma laidlawii (strain PG-8A).